The chain runs to 652 residues: ATP-binding cassette sub-family G member 5 (652 aa).

Residues 1–30 (MSELPFLSPEGARGPHNNRGSQSSLEEGSV) form a disordered region. Residues 1-384 (MSELPFLSPE…RVTRNLMRNK (384 aa)) lie on the Cytoplasmic side of the membrane. The segment covering 18–30 (NRGSQSSLEEGSV) has biased composition (polar residues). Residues 39-294 (LGVLNVSFSV…FNNCGYPCPE (256 aa)) form the ABC transporter domain. 87–94 (GSSGSGKT) serves as a coordination point for ATP. The helical transmembrane segment at 385-405 (QVVIMRLVQNLIMGLFLIFYL) threads the bilayer. The 258-residue stretch at 389–646 (MRLVQNLIMG…ILGMVVFKVR (258 aa)) folds into the ABC transmembrane type-2 domain. Residues 406–422 (LRVQNNMLKGAVQDRVG) are Extracellular-facing. A helical membrane pass occupies residues 423 to 443 (LLYQLVGATPYTGMLNAVNLF). Topologically, residues 444–468 (PMLRAVSDQESQDGLYQKWQMLLAY) are cytoplasmic. A helical membrane pass occupies residues 469 to 490 (VLHALPFSIVATVIFSSVCYWT). Residues 491 to 501 (LGLYPEVARFG) lie on the Extracellular side of the membrane. The chain crosses the membrane as a helical span at residues 502–522 (YFSAALLAPHLIGEFLTLVLL). The Cytoplasmic portion of the chain corresponds to 523–529 (GMVQNPN). A helical transmembrane segment spans residues 530 to 550 (IVNSIVALLSISGLLIGSGFI). The Extracellular segment spans residues 551–624 (RNIEEMPIPL…PGATSRFTTN (74 aa)). 2 N-linked (GlcNAc...) asparagine glycosylation sites follow: Asn-585 and Asn-592. Residues 625–645 (FLILYSFIPTLVILGMVVFKV) form a helical membrane-spanning segment. The Cytoplasmic segment spans residues 646–652 (RDYLISR).

The protein belongs to the ABC transporter superfamily. ABCG family. Eye pigment precursor importer (TC 3.A.1.204) subfamily. Heterodimer with ABCG8. The cofactor is Mg(2+). In terms of processing, N-glycosylated. N-glycosylation is important for efficient export out of the endoplasmic reticulum. Detected in liver (at protein level). Expressed only in liver and intestine.

The protein localises to the cell membrane. It localises to the apical cell membrane. It catalyses the reaction cholesterol(in) + ATP + H2O = cholesterol(out) + ADP + phosphate + H(+). The enzyme catalyses sitosterol(in) + ATP + H2O = sitosterol(out) + ADP + phosphate + H(+). In terms of biological role, ABCG5 and ABCG8 form an obligate heterodimer that mediates Mg(2+)- and ATP-dependent sterol transport across the cell membrane. Plays an essential role in the selective transport of dietary plant sterols and cholesterol in and out of the enterocytes and in the selective sterol excretion by the liver into bile. Required for normal sterol homeostasis. The heterodimer with ABCG8 has ATPase activity. The protein is ATP-binding cassette sub-family G member 5 of Rattus norvegicus (Rat).